The sequence spans 541 residues: Chlorophyllide a oxygenase, chloroplastic (541 aa).

Residues 114-151 (LAREFKSIGTLRKELAELQEELAKAHNQVHLSETRVSS) adopt a coiled-coil conformation. The segment covering 178-192 (AECTSLAPSTSSASR) has biased composition (polar residues). A disordered region spans residues 178–208 (AECTSLAPSTSSASRVVNKKPPRRSLNVSGP). Residues 220–320 (WYPVAFSSDL…CFEQEGMVWI (101 aa)) enclose the Rieske domain. 4 residues coordinate [2Fe-2S] cluster: Cys261, His263, Cys280, and His283. Fe cation contacts are provided by Asp359, Asp363, His366, and His371.

In terms of tissue distribution, expressed in leaves and germinating seedlings, but not in sheaths and roots.

It localises to the plastid. The protein localises to the chloroplast membrane. Its subcellular location is the chloroplast thylakoid membrane. The catalysed reaction is chlorophyllide a + 2 NADPH + 2 O2 + 2 H(+) = chlorophyllide b + 2 NADP(+) + 3 H2O. Functionally, catalyzes a two-step oxygenase reaction involved in the synthesis of chlorophyll b. Acts specifically on the non-esterified chlorophyllide a and not on chlorophyll a. The chain is Chlorophyllide a oxygenase, chloroplastic (CAO) from Oryza sativa subsp. japonica (Rice).